Consider the following 556-residue polypeptide: Vacuolar protein 8 (556 aa).

G2 carries the N-myristoyl glycine lipid modification. S-palmitoyl cysteine attachment occurs at residues C4, C5, and C7. ARM repeat units follow at residues 38 to 74 (NRSE…AFAE), 75 to 115 (VTEK…NLAV), 117 to 156 (DSNK…NLAT), 158 to 197 (DQNK…NMTH), 199 to 238 (LENR…NIAV), 242 to 281 (NRKK…NLAS), 283 to 322 (ANYQ…NISI), 324 to 364 (PLNE…NLAA), and 408 to 447 (DDLK…NLCS).

The protein belongs to the beta-catenin family.

The protein localises to the vacuole membrane. Functionally, functions in both vacuole inheritance and protein targeting from the cytoplasm to vacuole. This is Vacuolar protein 8 (VAC8) from Komagataella pastoris (Yeast).